The sequence spans 326 residues: Glycerol-3-phosphate dehydrogenase [NAD(P)+] (326 aa).

Trp15, Arg35, and Lys107 together coordinate NADPH. Lys107, Gly135, and Ser137 together coordinate sn-glycerol 3-phosphate. Position 139 (Ala139) interacts with NADPH. Sn-glycerol 3-phosphate-binding residues include Lys190, Asp243, Ser253, Arg254, and Asn255. The active-site Proton acceptor is the Lys190. Residue Arg254 coordinates NADPH. The NADPH site is built by Leu273 and Glu275.

Belongs to the NAD-dependent glycerol-3-phosphate dehydrogenase family.

The protein resides in the cytoplasm. It catalyses the reaction sn-glycerol 3-phosphate + NAD(+) = dihydroxyacetone phosphate + NADH + H(+). The catalysed reaction is sn-glycerol 3-phosphate + NADP(+) = dihydroxyacetone phosphate + NADPH + H(+). The protein operates within membrane lipid metabolism; glycerophospholipid metabolism. Functionally, catalyzes the reduction of the glycolytic intermediate dihydroxyacetone phosphate (DHAP) to sn-glycerol 3-phosphate (G3P), the key precursor for phospholipid synthesis. This chain is Glycerol-3-phosphate dehydrogenase [NAD(P)+], found in Bradyrhizobium diazoefficiens (strain JCM 10833 / BCRC 13528 / IAM 13628 / NBRC 14792 / USDA 110).